Here is a 180-residue protein sequence, read N- to C-terminus: Pro-glucagon (180 aa).

The first 20 residues, 1-20, serve as a signal peptide directing secretion; it reads MKSLYFVAGLFVMLVQGSWQ. The segment covering 25-35 has biased composition (polar residues); that stretch reads NTEEKSSSFPA. Residues 25–59 are disordered; that stretch reads NTEEKSSSFPAPQTDPLGDPDQINEDKRHSQGTFT. Serine 54 carries the post-translational modification Phosphoserine. Positions 84–89 are excised as a propeptide; that stretch reads NKNNIA. Serine 105 and serine 108 each carry phosphoserine. Residue arginine 127 is modified to Arginine amide. Positions 131–145 are excised as a propeptide; sequence DFPEEVNIVEELRRR. Phosphoserine is present on residues serine 150 and serine 152.

It belongs to the glucagon family. In terms of processing, proglucagon is post-translationally processed in a tissue-specific manner in pancreatic A cells and intestinal L cells. In pancreatic A cells, the major bioactive hormone is glucagon cleaved by PCSK2/PC2. In the intestinal L cells PCSK1/PC1 liberates GLP-1, GLP-2, glicentin and oxyntomodulin. GLP-1 is further N-terminally truncated by post-translational processing in the intestinal L cells resulting in GLP-1(7-37) GLP-1-(7-36)amide. The C-terminal amidation is neither important for the metabolism of GLP-1 nor for its effects on the endocrine pancreas. As to expression, glucagon is secreted in the A cells of the islets of Langerhans. GLP-1, GLP-2, oxyntomodulin and glicentin are secreted from enteroendocrine cells throughout the gastrointestinal tract.

The protein resides in the secreted. Its function is as follows. Plays a key role in glucose metabolism and homeostasis. Regulates blood glucose by increasing gluconeogenesis and decreasing glycolysis. A counterregulatory hormone of insulin, raises plasma glucose levels in response to insulin-induced hypoglycemia. Plays an important role in initiating and maintaining hyperglycemic conditions in diabetes. Functionally, potent stimulator of glucose-dependent insulin release. Also stimulates insulin release in response to IL6. Plays important roles on gastric motility and the suppression of plasma glucagon levels. May be involved in the suppression of satiety and stimulation of glucose disposal in peripheral tissues, independent of the actions of insulin. Has growth-promoting activities on intestinal epithelium. May also regulate the hypothalamic pituitary axis (HPA) via effects on LH, TSH, CRH, oxytocin, and vasopressin secretion. Increases islet mass through stimulation of islet neogenesis and pancreatic beta cell proliferation. Inhibits beta cell apoptosis. In terms of biological role, stimulates intestinal growth and up-regulates villus height in the small intestine, concomitant with increased crypt cell proliferation and decreased enterocyte apoptosis. The gastrointestinal tract, from the stomach to the colon is the principal target for GLP-2 action. Plays a key role in nutrient homeostasis, enhancing nutrient assimilation through enhanced gastrointestinal function, as well as increasing nutrient disposal. Stimulates intestinal glucose transport and decreases mucosal permeability. Significantly reduces food intake. Inhibits gastric emptying in humans. Suppression of gastric emptying may lead to increased gastric distension, which may contribute to satiety by causing a sensation of fullness. Its function is as follows. May modulate gastric acid secretion and the gastro-pyloro-duodenal activity. May play an important role in intestinal mucosal growth in the early period of life. The chain is Pro-glucagon (GCG) from Bos taurus (Bovine).